Consider the following 581-residue polypeptide: Proline--tRNA ligase (581 aa).

It belongs to the class-II aminoacyl-tRNA synthetase family. ProS type 1 subfamily. Homodimer.

The protein localises to the cytoplasm. It carries out the reaction tRNA(Pro) + L-proline + ATP = L-prolyl-tRNA(Pro) + AMP + diphosphate. Catalyzes the attachment of proline to tRNA(Pro) in a two-step reaction: proline is first activated by ATP to form Pro-AMP and then transferred to the acceptor end of tRNA(Pro). As ProRS can inadvertently accommodate and process non-cognate amino acids such as alanine and cysteine, to avoid such errors it has two additional distinct editing activities against alanine. One activity is designated as 'pretransfer' editing and involves the tRNA(Pro)-independent hydrolysis of activated Ala-AMP. The other activity is designated 'posttransfer' editing and involves deacylation of mischarged Ala-tRNA(Pro). The misacylated Cys-tRNA(Pro) is not edited by ProRS. In Rhodococcus erythropolis (strain PR4 / NBRC 100887), this protein is Proline--tRNA ligase.